Consider the following 255-residue polypeptide: MTNTQVTLVQLDNYGPWTVTPSPRREVDLQTLQSRLYADLSQAIGTRDGYVFFTRFDNMIAVTNGLDLEAHARVQESIRNRYPITASLSIGTGSTPADALVGATGALQQQGSAQDADRRETLLGQPIPDAERTDDDVQIAHFDVIDATGTYTDELDAFASFTHIEAGYAALMRHMHDAHDSLSFFVGGDNIIAVCPGLSDGDYEDAIAHVQDTADVALRVGVGRGASAHDAGMGAKHALEVAREHDTIVERSGRQ.

It belongs to the archaeal-type GTP cyclohydrolase family.

The enzyme catalyses GTP + 3 H2O = 2-amino-5-formylamino-6-(5-phospho-D-ribosylamino)pyrimidin-4(3H)-one + 2 phosphate + 2 H(+). Functionally, catalyzes the formation of 2-amino-5-formylamino-6-ribofuranosylamino-4(3H)-pyrimidinone ribonucleotide monophosphate and inorganic phosphate from GTP. Also has an independent pyrophosphate phosphohydrolase activity. This chain is GTP cyclohydrolase III 1 (gch31), found in Halobacterium salinarum (strain ATCC 700922 / JCM 11081 / NRC-1) (Halobacterium halobium).